The chain runs to 434 residues: Serine hydroxymethyltransferase 2 (434 aa).

Residues Leu-136 and 140-142 contribute to the (6S)-5,6,7,8-tetrahydrofolate site; that span reads GHL. N6-(pyridoxal phosphate)lysine is present on Lys-245.

The protein belongs to the SHMT family. In terms of assembly, homodimer. Requires pyridoxal 5'-phosphate as cofactor.

Its subcellular location is the cytoplasm. It catalyses the reaction (6R)-5,10-methylene-5,6,7,8-tetrahydrofolate + glycine + H2O = (6S)-5,6,7,8-tetrahydrofolate + L-serine. It functions in the pathway one-carbon metabolism; tetrahydrofolate interconversion. Its pathway is amino-acid biosynthesis; glycine biosynthesis; glycine from L-serine: step 1/1. In terms of biological role, catalyzes the reversible interconversion of serine and glycine with tetrahydrofolate (THF) serving as the one-carbon carrier. This reaction serves as the major source of one-carbon groups required for the biosynthesis of purines, thymidylate, methionine, and other important biomolecules. Also exhibits THF-independent aldolase activity toward beta-hydroxyamino acids, producing glycine and aldehydes, via a retro-aldol mechanism. The chain is Serine hydroxymethyltransferase 2 from Rhodopseudomonas palustris (strain ATCC BAA-98 / CGA009).